A 294-amino-acid polypeptide reads, in one-letter code: 4-hydroxy-tetrahydrodipicolinate synthase (294 aa).

Residue Thr45 participates in pyruvate binding. Tyr133 acts as the Proton donor/acceptor in catalysis. The active-site Schiff-base intermediate with substrate is Lys162. Residue Ile204 participates in pyruvate binding.

It belongs to the DapA family. As to quaternary structure, homotetramer; dimer of dimers.

It localises to the cytoplasm. It carries out the reaction L-aspartate 4-semialdehyde + pyruvate = (2S,4S)-4-hydroxy-2,3,4,5-tetrahydrodipicolinate + H2O + H(+). It functions in the pathway amino-acid biosynthesis; L-lysine biosynthesis via DAP pathway; (S)-tetrahydrodipicolinate from L-aspartate: step 3/4. Its activity is regulated as follows. Is allosterically regulated by the feedback inhibitor (S)-lysine. Its function is as follows. Catalyzes the condensation of (S)-aspartate-beta-semialdehyde [(S)-ASA] and pyruvate to 4-hydroxy-tetrahydrodipicolinate (HTPA). The sequence is that of 4-hydroxy-tetrahydrodipicolinate synthase from Agrobacterium fabrum (strain C58 / ATCC 33970) (Agrobacterium tumefaciens (strain C58)).